The sequence spans 290 residues: Inositol monophosphatase 2 (290 aa).

The Mg(2+) site is built by Glu-83, Asp-103, Ile-105, and Asp-106. Glu-83 provides a ligand contact to substrate. Substrate-binding positions include 105–108 (IDGT), 207–209 (GSS), Gln-226, and Asp-233. Asp-233 is a binding site for Mg(2+).

It belongs to the inositol monophosphatase superfamily. Homodimer. The cofactor is Mg(2+).

It is found in the cytoplasm. It carries out the reaction a myo-inositol phosphate + H2O = myo-inositol + phosphate. It participates in polyol metabolism; myo-inositol biosynthesis; myo-inositol from D-glucose 6-phosphate: step 2/2. Functionally, can use myo-inositol monophosphates, scylloinositol 1,4-diphosphate, glucose-1-phosphate, beta-glycerophosphate, and 2'-AMP as substrates. Has been implicated as the pharmacological target for lithium Li(+) action in brain. The protein is Inositol monophosphatase 2 (Impa2) of Rattus norvegicus (Rat).